We begin with the raw amino-acid sequence, 576 residues long: Lysine--tRNA ligase (576 aa).

2 residues coordinate Mg(2+): Glu413 and Glu420.

The protein belongs to the class-II aminoacyl-tRNA synthetase family. In terms of assembly, homodimer. It depends on Mg(2+) as a cofactor.

Its subcellular location is the cytoplasm. It carries out the reaction tRNA(Lys) + L-lysine + ATP = L-lysyl-tRNA(Lys) + AMP + diphosphate. This is Lysine--tRNA ligase from Bacteroides thetaiotaomicron (strain ATCC 29148 / DSM 2079 / JCM 5827 / CCUG 10774 / NCTC 10582 / VPI-5482 / E50).